We begin with the raw amino-acid sequence, 491 residues long: Probable cytosol aminopeptidase (491 aa).

The Mn(2+) site is built by Lys264 and Asp269. The active site involves Lys276. Asp287, Asp346, and Glu348 together coordinate Mn(2+). Residue Arg350 is part of the active site.

The protein belongs to the peptidase M17 family. The cofactor is Mn(2+).

The protein localises to the cytoplasm. It catalyses the reaction Release of an N-terminal amino acid, Xaa-|-Yaa-, in which Xaa is preferably Leu, but may be other amino acids including Pro although not Arg or Lys, and Yaa may be Pro. Amino acid amides and methyl esters are also readily hydrolyzed, but rates on arylamides are exceedingly low.. The catalysed reaction is Release of an N-terminal amino acid, preferentially leucine, but not glutamic or aspartic acids.. In terms of biological role, presumably involved in the processing and regular turnover of intracellular proteins. Catalyzes the removal of unsubstituted N-terminal amino acids from various peptides. The chain is Probable cytosol aminopeptidase from Xylella fastidiosa (strain Temecula1 / ATCC 700964).